Here is a 516-residue protein sequence, read N- to C-terminus: Nuclear speckle splicing regulatory protein 1 (516 aa).

4 disordered regions span residues 1 to 43 (MATS…GESL), 111 to 137 (ERKK…KFAD), 151 to 170 (KERQ…EAAL), and 188 to 494 (QTVG…SSAR). S33 bears the Phosphoserine mark. Residues 100–176 (KYINQLLRAV…EAALDVKKQK (77 aa)) are a coiled coil. Residues 207 to 221 (TSSAAAERSPSPEST) show a composition bias toward low complexity. Composition is skewed to basic and acidic residues over residues 222 to 239 (ANRR…DQVD) and 271 to 466 (ERER…KLVE). Residues 358–401 (KGERDRRDNSPKDRERDRKGERDRRDNSPKDRERETRDKSPKDR) are a coiled coil.

Belongs to the NSRP1 family.

The protein is Nuclear speckle splicing regulatory protein 1 (nsrp1) of Danio rerio (Zebrafish).